The following is a 152-amino-acid chain: MGSSAITTSFLLFVAFQLPGQTGANPVYGSVSNADLMDFKNLLDRLEDKMPLEDEAVPSQVLSEQNEEAGAPLSPLSEVPPWDGGRSTQPREMGAPSDGDPGNPPRSVLLKSKLRALLTAPRSLRRSSCFGGRMDRIGAQSGLGCNSFRYRR.

An N-terminal signal peptide occupies residues 1–24 (MGSSAITTSFLLFVAFQLPGQTGA). Propeptides lie at residues 25–122 (NPVY…TAPR) and 92–102 (EMGAPSDGDPG). The interval 50–108 (MPLEDEAVPSQVLSEQNEEAGAPLSPLSEVPPWDGGRSTQPREMGAPSDGDPGNPPRSV) is disordered. Position 128 is a phosphoserine (S128). A disulfide bridge links C129 with C145. The tract at residues 146–150 (NSFRY) is important for degradation of atrial natriuretic peptide by IDE.

It belongs to the natriuretic peptide family. Homodimer; disulfide-linked antiparallel dimer. The precursor molecule is proteolytically cleaved by CORIN at Arg-122 to produce the atrial natriuretic peptide. Undergoes further proteolytic cleavage by unknown proteases to give rise to long-acting natriuretic peptide, vessel dilator and kaliuretic peptide. Additional processing gives rise to the auriculin and atriopeptin peptides. In the kidneys, alternative processing by an unknown protease results in the peptide urodilatin. Post-translationally, cleavage by MME initiates degradation of the factor and thereby regulates its activity. Degradation by IDE results in reduced activation of NPR1 (in vitro). During IDE degradation, the resulting products can temporarily stimulate NPR2 to produce cGMP, before the fragments are completely degraded and inactivated by IDE (in vitro). In terms of processing, degraded by IDE. Phosphorylation on Ser-128 decreases vasorelaxant activity.

It is found in the secreted. It localises to the perikaryon. The protein resides in the cell projection. Functionally, hormone that plays a key role in mediating cardio-renal homeostasis, and is involved in vascular remodeling and regulating energy metabolism. Acts by specifically binding and stimulating NPR1 to produce cGMP, which in turn activates effector proteins, such as PRKG1, that drive various biological responses. Regulates vasodilation, natriuresis, diuresis and aldosterone synthesis and is therefore essential for regulating blood pressure, controlling the extracellular fluid volume and maintaining the fluid-electrolyte balance. Also involved in inhibiting cardiac remodeling and cardiac hypertrophy by inducing cardiomyocyte apoptosis and attenuating the growth of cardiomyocytes and fibroblasts. Plays a role in female pregnancy by promoting trophoblast invasion and spiral artery remodeling in uterus, and thus prevents pregnancy-induced hypertension. In adipose tissue, acts in various cGMP- and PKG-dependent pathways to regulate lipid metabolism and energy homeostasis. This includes up-regulating lipid metabolism and mitochondrial oxygen utilization by activating the AMP-activated protein kinase (AMPK), and increasing energy expenditure by acting via MAPK11 to promote the UCP1-dependent thermogenesis of brown adipose tissue. Binds the clearance receptor NPR3 which removes the hormone from circulation. May have a role in cardio-renal homeostasis through regulation of natriuresis, diuresis, vasodilation, and inhibiting aldosterone synthesis. In vitro, promotes the production of cGMP and induces vasodilation. May promote natriuresis, at least in part, by enhancing prostaglandin E2 synthesis resulting in the inhibition of renal Na+-K+-ATPase. However reports on the involvement of this peptide in mammal blood volume and blood pressure homeostasis are conflicting; according to a report, in vivo it is not sufficient to activate cGMP and does not inhibit collecting duct transport nor effect diuresis and natriuresis. Appears to bind to specific receptors that are distinct from the receptors bound by atrial natriuretic peptide and vessel dilator. Possibly enhances protein excretion in urine by decreasing proximal tubular protein reabsorption. Its function is as follows. May have a role in cardio-renal homeostasis through regulation of natriuresis, diuresis, and vasodilation. In vitro, promotes the production of cGMP and induces vasodilation. May promote natriuresis, at least in part, by enhancing prostaglandin E2 synthesis resulting in the inhibition of renal Na+-K+-ATPase. However reports on the involvement of this peptide in mammal blood volume and blood pressure homeostasis are conflicting; according to a report it is not sufficient to activate cGMP and does not inhibit collecting duct transport nor effect diuresis and natriuresis. Appears to bind to specific receptors that are distinct from the receptors bound by the atrial natriuretic and long-acting natriuretic peptides. Possibly functions in protein excretion in urine by maintaining the integrity of the proximal tubules and enhancing protein excretion by decreasing proximal tubular protein reabsorption. In terms of biological role, may have a role in cardio-renal homeostasis through regulation of diuresis and inhibiting aldosterone synthesis. In vitro, promotes the production of cGMP and induces vasodilation. May promote natriuresis, at least in part, by enhancing prostaglandin E2 synthesis resulting in the inhibition of renal Na+-K+-ATPase. May have a role in potassium excretion but not sodium excretion (natriuresis). Possibly enhances protein excretion in urine by decreasing proximal tubular protein reabsorption. Functionally, hormone produced in the kidneys that appears to be important for maintaining cardio-renal homeostasis. Mediates vasodilation, natriuresis and diuresis primarily in the renal system, in order to maintain the extracellular fluid volume and control the fluid-electrolyte balance. Specifically binds and stimulates cGMP production by renal transmembrane receptors, likely NPR1. Urodilatin not ANP, may be the natriuretic peptide responsible for the regulation of sodium and water homeostasis in the kidney. May have a role in cardio-renal homeostasis through regulation of natriuresis and vasodilation. In vivo promotes natriuresis and in vitro, vasodilates renal artery strips. Its function is as follows. May have a role in cardio-renal homeostasis through regulation of regulation of natriuresis and vasodilation. In vivo promotes natriuresis. In vitro, vasodilates intestinal smooth muscle but not smooth muscle strips. In terms of biological role, may have a role in cardio-renal homeostasis through regulation of natriuresis and vasodilation. In vivo promotes natriuresis. In vitro, selectively vasodilates intestinal and vascular smooth muscle strips. Functionally, may have a role in cardio-renal homeostasis through regulation of natriuresis and vasodilation. In vivo promotes natriuresis. In vitro, selectively vasodilates intestinal smooth muscle but not vascular smooth muscle strips. This Ovis aries (Sheep) protein is Natriuretic peptides A (NPPA).